Here is a 63-residue protein sequence, read N- to C-terminus: Large ribosomal subunit protein uL29 (63 aa).

It belongs to the universal ribosomal protein uL29 family.

The sequence is that of Large ribosomal subunit protein uL29 from Vibrio cholerae serotype O1 (strain ATCC 39541 / Classical Ogawa 395 / O395).